The following is a 303-amino-acid chain: Aspartate carbamoyltransferase catalytic subunit (303 aa).

Residues Arg51 and Thr52 each coordinate carbamoyl phosphate. Lys80 contributes to the L-aspartate binding site. Carbamoyl phosphate is bound by residues Arg101, His129, and Gln132. 2 residues coordinate L-aspartate: Arg162 and Arg221. Positions 260 and 261 each coordinate carbamoyl phosphate.

This sequence belongs to the aspartate/ornithine carbamoyltransferase superfamily. ATCase family. As to quaternary structure, heterooligomer of catalytic and regulatory chains.

It carries out the reaction carbamoyl phosphate + L-aspartate = N-carbamoyl-L-aspartate + phosphate + H(+). The protein operates within pyrimidine metabolism; UMP biosynthesis via de novo pathway; (S)-dihydroorotate from bicarbonate: step 2/3. Catalyzes the condensation of carbamoyl phosphate and aspartate to form carbamoyl aspartate and inorganic phosphate, the committed step in the de novo pyrimidine nucleotide biosynthesis pathway. In Saccharolobus solfataricus (strain ATCC 35092 / DSM 1617 / JCM 11322 / P2) (Sulfolobus solfataricus), this protein is Aspartate carbamoyltransferase catalytic subunit.